Reading from the N-terminus, the 124-residue chain is Small ribosomal subunit protein bS6 (124 aa).

Positions 105–115 (EVQHEEARKSA) are enriched in basic and acidic residues. The tract at residues 105–124 (EVQHEEARKSAQSDAPVAAA) is disordered.

The protein belongs to the bacterial ribosomal protein bS6 family.

Binds together with bS18 to 16S ribosomal RNA. The protein is Small ribosomal subunit protein bS6 of Polynucleobacter necessarius subsp. necessarius (strain STIR1).